The following is a 376-amino-acid chain: 2-hydroxypropyl-CoM lyase (376 aa).

Zn(2+) contacts are provided by His218, Cys220, and Cys341.

The protein belongs to the vitamin-B12 independent methionine synthase family. In terms of assembly, homohexamer. Component I of the aliphatic epoxide carboxylation complex together with components II, III and IV. Zn(2+) is required as a cofactor.

It catalyses the reaction (R)-2-hydroxypropyl-coenzyme M = (R)-1,2-epoxypropane + coenzyme M. The catalysed reaction is (S)-2-hydroxypropyl-coenzyme M = (S)-1,2-epoxypropane + coenzyme M. The protein operates within alkene metabolism; propylene degradation. Its activity is regulated as follows. Inhibited by methylepoxypropane. Inhibited by the zinc chelator 4-(2-pyridylazo)resorcinol (PAR), in the presence of p- (hydroxymercuri)benzenesulfonic acid (PMPS), and by EDTA. Not inhibited by the coenzyme M analog 2-bromoethanesulfonate (BES). Functionally, involved in aliphatic epoxide carboxylation. Catalyzes the addition of coenzyme M (CoM) to either R- or S-epoxypropane to form the thioether conjugate 2-hydroxypropyl-CoM. Catalyzes the reaction of CoM with R-epoxypropane at a rate approximately twice of that with S-epoxypropane. The CoM analogs 2-mercaptopropionate, 2-mercaptoethanol and cysteine substitute poorly for CoM as the thiol substrate. The polypeptide is 2-hydroxypropyl-CoM lyase (Xanthobacter autotrophicus (strain ATCC BAA-1158 / Py2)).